The following is a 155-amino-acid chain: Transcriptional repressor NrdR (155 aa).

A zinc finger lies at 3–34; that stretch reads CPFCGNVDTQVKDSRPAEDHVSIRRRRFCPAC. Residues 49–139 enclose the ATP-cone domain; that stretch reads LVVIKTNGKR…VYKNFQAADD (91 aa).

The protein belongs to the NrdR family. It depends on Zn(2+) as a cofactor.

Functionally, negatively regulates transcription of bacterial ribonucleotide reductase nrd genes and operons by binding to NrdR-boxes. This Ruegeria sp. (strain TM1040) (Silicibacter sp.) protein is Transcriptional repressor NrdR.